A 525-amino-acid polypeptide reads, in one-letter code: GMP synthase [glutamine-hydrolyzing] (525 aa).

The 199-residue stretch at 9-207 (RILILDFGSQ…VRDICQCEAL (199 aa)) folds into the Glutamine amidotransferase type-1 domain. Cysteine 86 acts as the Nucleophile in catalysis. Active-site residues include histidine 181 and glutamate 183. Residues 208–400 (WTPAKIIDDA…LGLPYDMLYR (193 aa)) enclose the GMPS ATP-PPase domain. 235–241 (SGGVDSS) is an ATP binding site.

Homodimer.

The enzyme catalyses XMP + L-glutamine + ATP + H2O = GMP + L-glutamate + AMP + diphosphate + 2 H(+). Its pathway is purine metabolism; GMP biosynthesis; GMP from XMP (L-Gln route): step 1/1. Functionally, catalyzes the synthesis of GMP from XMP. The polypeptide is GMP synthase [glutamine-hydrolyzing] (Shigella flexneri serotype 5b (strain 8401)).